Reading from the N-terminus, the 336-residue chain is Glyoxylate reductase (336 aa).

NADP(+) is bound by residues 158-161, 180-182, and 239-241; these read FGRI, SRT, and IAR. Catalysis depends on residues Arg241 and Glu270. His288 (proton donor) is an active-site residue. 288–290 lines the NADP(+) pocket; sequence HIG.

Belongs to the D-isomer specific 2-hydroxyacid dehydrogenase family. GyaR subfamily. Homodimer.

It localises to the cytoplasm. It catalyses the reaction glycolate + NAD(+) = glyoxylate + NADH + H(+). The sequence is that of Glyoxylate reductase from Pyrococcus furiosus (strain ATCC 43587 / DSM 3638 / JCM 8422 / Vc1).